The following is a 508-amino-acid chain: Maturase K (508 aa).

This sequence belongs to the intron maturase 2 family. MatK subfamily.

It is found in the plastid. It localises to the chloroplast. Usually encoded in the trnK tRNA gene intron. Probably assists in splicing its own and other chloroplast group II introns. The sequence is that of Maturase K from Stewartia pseudocamellia (Japanese stewartia).